The primary structure comprises 244 residues: LexA repressor (244 aa).

The interval 1 to 24 is disordered; it reads MSDSSDTTVDGASDGASDGASGAD. Residues 10-24 are compositionally biased toward low complexity; that stretch reads DGASDGASDGASGAD. A DNA-binding region (H-T-H motif) is located at residues 58 to 78; the sequence is IREIGDAVGLTSTSSVAHQLR. Catalysis depends on for autocatalytic cleavage activity residues serine 168 and lysine 205.

The protein belongs to the peptidase S24 family. As to quaternary structure, homodimer.

The catalysed reaction is Hydrolysis of Ala-|-Gly bond in repressor LexA.. Functionally, represses a number of genes involved in the response to DNA damage (SOS response), including recA and lexA. In the presence of single-stranded DNA, RecA interacts with LexA causing an autocatalytic cleavage which disrupts the DNA-binding part of LexA, leading to derepression of the SOS regulon and eventually DNA repair. The sequence is that of LexA repressor from Mycobacterium ulcerans (strain Agy99).